We begin with the raw amino-acid sequence, 186 residues long: Adenine phosphoribosyltransferase (186 aa).

This sequence belongs to the purine/pyrimidine phosphoribosyltransferase family. Homodimer.

It localises to the cytoplasm. The catalysed reaction is AMP + diphosphate = 5-phospho-alpha-D-ribose 1-diphosphate + adenine. Its pathway is purine metabolism; AMP biosynthesis via salvage pathway; AMP from adenine: step 1/1. Catalyzes a salvage reaction resulting in the formation of AMP, that is energically less costly than de novo synthesis. This is Adenine phosphoribosyltransferase from Xanthomonas campestris pv. campestris (strain 8004).